Reading from the N-terminus, the 496-residue chain is tRNA-2-methylthio-N(6)-dimethylallyladenosine synthase (496 aa).

Residues 43–160 form the MTTase N-terminal domain; it reads KKVFVTTQGC…LPELYDQSHQ (118 aa). Positions 52, 89, 123, 204, 208, and 211 each coordinate [4Fe-4S] cluster. The 233-residue stretch at 190–422 folds into the Radical SAM core domain; the sequence is RVEGFKAFVS…QKVIIDSTLA (233 aa). Residues 425–493 enclose the TRAM domain; that stretch reads HEMVGTTTRV…PHMVKGEIEA (69 aa).

It belongs to the methylthiotransferase family. MiaB subfamily. Monomer. [4Fe-4S] cluster serves as cofactor.

It localises to the cytoplasm. The catalysed reaction is N(6)-dimethylallyladenosine(37) in tRNA + (sulfur carrier)-SH + AH2 + 2 S-adenosyl-L-methionine = 2-methylsulfanyl-N(6)-dimethylallyladenosine(37) in tRNA + (sulfur carrier)-H + 5'-deoxyadenosine + L-methionine + A + S-adenosyl-L-homocysteine + 2 H(+). Its function is as follows. Catalyzes the methylthiolation of N6-(dimethylallyl)adenosine (i(6)A), leading to the formation of 2-methylthio-N6-(dimethylallyl)adenosine (ms(2)i(6)A) at position 37 in tRNAs that read codons beginning with uridine. The protein is tRNA-2-methylthio-N(6)-dimethylallyladenosine synthase of Psychrobacter arcticus (strain DSM 17307 / VKM B-2377 / 273-4).